The chain runs to 966 residues: uncharacterized protein (966 aa).

Residues M1–A24 form the signal peptide. The next 6 membrane-spanning stretches (helical) occupy residues I601–A621, L711–I731, A743–F763, V785–V805, F822–F842, and G855–V875. The disordered stretch occupies residues T918 to K966. Positions A926–K966 are enriched in basic and acidic residues.

Belongs to the TrbL/VirB6 family.

Its subcellular location is the cell membrane. This is an uncharacterized protein from Rickettsia conorii (strain ATCC VR-613 / Malish 7).